A 529-amino-acid chain; its full sequence is Peptide chain release factor 3 (529 aa).

The region spanning 10-279 (EQRRCFGIIS…ALVEMAPAPG (270 aa)) is the tr-type G domain. GTP contacts are provided by residues 19 to 26 (SHPDAGKT), 87 to 91 (DTPGH), and 141 to 144 (NKMD).

It belongs to the TRAFAC class translation factor GTPase superfamily. Classic translation factor GTPase family. PrfC subfamily.

It is found in the cytoplasm. Functionally, increases the formation of ribosomal termination complexes and stimulates activities of RF-1 and RF-2. It binds guanine nucleotides and has strong preference for UGA stop codons. It may interact directly with the ribosome. The stimulation of RF-1 and RF-2 is significantly reduced by GTP and GDP, but not by GMP. The sequence is that of Peptide chain release factor 3 from Desulfatibacillum aliphaticivorans.